The primary structure comprises 198 residues: uncharacterized protein (198 aa).

This is an uncharacterized protein from Acheta domesticus (House cricket).